The chain runs to 236 residues: 2,3,4,5-tetrahydropyridine-2,6-dicarboxylate N-acetyltransferase (236 aa).

This sequence belongs to the transferase hexapeptide repeat family. DapH subfamily.

The catalysed reaction is (S)-2,3,4,5-tetrahydrodipicolinate + acetyl-CoA + H2O = L-2-acetamido-6-oxoheptanedioate + CoA. Its pathway is amino-acid biosynthesis; L-lysine biosynthesis via DAP pathway; LL-2,6-diaminopimelate from (S)-tetrahydrodipicolinate (acetylase route): step 1/3. Its function is as follows. Catalyzes the transfer of an acetyl group from acetyl-CoA to tetrahydrodipicolinate. The sequence is that of 2,3,4,5-tetrahydropyridine-2,6-dicarboxylate N-acetyltransferase from Limosilactobacillus reuteri (strain DSM 20016) (Lactobacillus reuteri).